A 295-amino-acid chain; its full sequence is Glutamyl-Q tRNA(Asp) synthetase (295 aa).

L-glutamate contacts are provided by residues 5–9 and Glu-41; that span reads RFAPS. The 'HIGH' region signature appears at 8-18; the sequence is PSPTGLLHIGS. Cys-97, Cys-99, Tyr-117, and Cys-121 together coordinate Zn(2+). L-glutamate contacts are provided by Tyr-178 and Arg-196. The 'KMSKS' region motif lies at 234–238; the sequence is KWSKQ. Residue Lys-237 participates in ATP binding.

Belongs to the class-I aminoacyl-tRNA synthetase family. GluQ subfamily. It depends on Zn(2+) as a cofactor.

Functionally, catalyzes the tRNA-independent activation of glutamate in presence of ATP and the subsequent transfer of glutamate onto a tRNA(Asp). Glutamate is transferred on the 2-amino-5-(4,5-dihydroxy-2-cyclopenten-1-yl) moiety of the queuosine in the wobble position of the QUC anticodon. The protein is Glutamyl-Q tRNA(Asp) synthetase of Neisseria meningitidis serogroup B (strain ATCC BAA-335 / MC58).